The chain runs to 592 residues: MLAPIQTIARPVSSILPATGALAAKRTFFAPSEVYNKKQVIVTKKTGLDILNDPKLNKGSAFTADEKDRLGIRGLVPPRPQSLEAQYKRCKTNLDKISDPLEKFIYLNHLQNRNETLYYKMILENFVELAPIIYTPVVGEACQKFHKIFTQTRGMYFSTADRGQMSAVAANWPYDDVDVIVVTDGSRILGLGDLGAGGMQIPIGKLTLYVCGGGINPRNVLPIVLDVGTNNKELLNDPLYLGMQHPRLQGEEFHAFVDEWVSAITDRFPKAVIQFEDFMMPNALDLLLKYKDQICMFNDDIQSTGAITLASVLATMRARGGTFADIKKETFLCLGAGSSGVGVCETIVDCIVAEGATREEAYAQFYMFDHKGLLGKGRDDLLPSQQVFMRKEIEGGKTPAELLKKIKPTCLLGLSTCPKLFNKEMLSYVASYCEKPGIFPLSNPTSRSECTAEEAVEFTDGNLIFASGSPFDPVEWKGKTIQTNQCNNSYSFPGIGLGLVSSRATRVPFETFQVCARVIASLGTPEMLATGKIFPDLDNLRAVSLEVGIEVAKMAERMNIATQFPPKGMDWREWLKHNMWQPEYPHIVVKNL.

A hydrogenosome-targeting transit peptide spans 1–27; sequence MLAPIQTIARPVSSILPATGALAAKRT. The active-site Proton donor is the tyrosine 134. 182–205 serves as a coordination point for NADP(+); it reads VTDGSRILGLGDLGAGGMQIPIGK. An NAD(+)-binding site is contributed by arginine 187. The active-site Proton acceptor is the lysine 205. Positions 276, 277, and 300 each coordinate a divalent metal cation. An NAD(+)-binding site is contributed by aspartate 300. 335-352 contacts NADP(+); sequence GAGSSGVGVCETIVDCIV. NAD(+) is bound at residue asparagine 443.

The protein belongs to the malic enzymes family. Mg(2+) is required as a cofactor. Requires Mn(2+) as cofactor.

Its subcellular location is the hydrogenosome. It catalyses the reaction (S)-malate + NADP(+) = pyruvate + CO2 + NADPH. The enzyme catalyses oxaloacetate + H(+) = pyruvate + CO2. The polypeptide is Malic enzyme, hydrogenosomal (Neocallimastix frontalis (Rumen fungus)).